The sequence spans 240 residues: Protein GrpE (240 aa).

Disordered stretches follow at residues 1–54 (MSGD…NEAR) and 206–240 (VSMG…DGNG). Positions 215–233 (GASSQPAEAPAADAPAEDS) are enriched in low complexity.

The protein belongs to the GrpE family. As to quaternary structure, homodimer.

The protein localises to the cytoplasm. In terms of biological role, participates actively in the response to hyperosmotic and heat shock by preventing the aggregation of stress-denatured proteins, in association with DnaK and GrpE. It is the nucleotide exchange factor for DnaK and may function as a thermosensor. Unfolded proteins bind initially to DnaJ; upon interaction with the DnaJ-bound protein, DnaK hydrolyzes its bound ATP, resulting in the formation of a stable complex. GrpE releases ADP from DnaK; ATP binding to DnaK triggers the release of the substrate protein, thus completing the reaction cycle. Several rounds of ATP-dependent interactions between DnaJ, DnaK and GrpE are required for fully efficient folding. This chain is Protein GrpE, found in Synechococcus sp. (strain WH7803).